We begin with the raw amino-acid sequence, 369 residues long: Probable dual-specificity RNA methyltransferase RlmN (369 aa).

The Proton acceptor role is filled by glutamate 108. In terms of domain architecture, Radical SAM core spans 114 to 351 (YPDRATLCIS…LAQGVSCTVR (238 aa)). A disulfide bond links cysteine 121 and cysteine 362. [4Fe-4S] cluster-binding residues include cysteine 128, cysteine 132, and cysteine 135. Residues 183–184 (GE), serine 217, 240–242 (SLH), and asparagine 319 each bind S-adenosyl-L-methionine. The S-methylcysteine intermediate role is filled by cysteine 362.

The protein belongs to the radical SAM superfamily. RlmN family. The cofactor is [4Fe-4S] cluster.

It localises to the cytoplasm. It catalyses the reaction adenosine(2503) in 23S rRNA + 2 reduced [2Fe-2S]-[ferredoxin] + 2 S-adenosyl-L-methionine = 2-methyladenosine(2503) in 23S rRNA + 5'-deoxyadenosine + L-methionine + 2 oxidized [2Fe-2S]-[ferredoxin] + S-adenosyl-L-homocysteine. The enzyme catalyses adenosine(37) in tRNA + 2 reduced [2Fe-2S]-[ferredoxin] + 2 S-adenosyl-L-methionine = 2-methyladenosine(37) in tRNA + 5'-deoxyadenosine + L-methionine + 2 oxidized [2Fe-2S]-[ferredoxin] + S-adenosyl-L-homocysteine. Specifically methylates position 2 of adenine 2503 in 23S rRNA and position 2 of adenine 37 in tRNAs. This chain is Probable dual-specificity RNA methyltransferase RlmN, found in Rhodococcus opacus (strain B4).